We begin with the raw amino-acid sequence, 226 residues long: NADH-quinone oxidoreductase subunit C (226 aa).

The disordered stretch occupies residues 1 to 21; it reads MTEPTGDQTPEIIGVRRGMFG.

This sequence belongs to the complex I 30 kDa subunit family. NDH-1 is composed of 14 different subunits. Subunits NuoB, C, D, E, F, and G constitute the peripheral sector of the complex.

It is found in the cell membrane. It carries out the reaction a quinone + NADH + 5 H(+)(in) = a quinol + NAD(+) + 4 H(+)(out). NDH-1 shuttles electrons from NADH, via FMN and iron-sulfur (Fe-S) centers, to quinones in the respiratory chain. The immediate electron acceptor for the enzyme in this species is believed to be a menaquinone. Couples the redox reaction to proton translocation (for every two electrons transferred, four hydrogen ions are translocated across the cytoplasmic membrane), and thus conserves the redox energy in a proton gradient. This is NADH-quinone oxidoreductase subunit C from Mycolicibacterium gilvum (strain PYR-GCK) (Mycobacterium gilvum (strain PYR-GCK)).